The primary structure comprises 10746 residues: Extracellular matrix-binding protein ebh (10746 aa).

The first 39 residues, 1–39 (MNYRDKIQKFSIRKYTVGTFSTVIATLVFLGLNTSQAQA), serve as a signal peptide directing secretion. 2 stretches are compositionally biased toward polar residues: residues 41–59 (ETNQPASALKQKQQNGDTQ) and 67–113 (VQNS…SQNE). 3 disordered regions span residues 41–174 (ETNQ…GNVQ), 246–274 (MPQRQQTSRRSSRIQTRSIESRAAEPRSV), and 1340–1372 (IAGNEKAQAEAGGRPNYKTTGYSQSNPTSDGQR). A compositionally biased stretch (low complexity) spans 120–130 (AAATPTQSAKA). Residues 132–158 (SKHEQSESRAANKKENDNKATHVESHE) show a composition bias toward basic and acidic residues. The span at 162–173 (VTASDSSDSGNV) shows a compositional bias: polar residues. Low complexity predominate over residues 248-263 (QRQQTSRRSSRIQTRS). Over residues 1356 to 1372 (YKTTGYSQSNPTSDGQR) the composition is skewed to polar residues. FIVAR domains are found at residues 2520-2576 (AKNH…VNAA), 2606-2662 (SKNN…ISDE), 2683-2746 (DTHE…VQTA), 2776-2832 (AKTK…IAAK), 2860-2915 (AKTQ…IRQN), 2943-2998 (AKNQ…INTN), 3026-3081 (AKTQ…INDK), 3150-3208 (AMTK…VNQK), 3276-3335 (AMTG…VNNA), 3403-3461 (AMGN…VNSA), 3529-3587 (AMGN…VTEA), 3655-3713 (AMNT…ITQK), 3781-3839 (AMAS…VEAA), 3907-3965 (AMGN…VEQA), 4033-4091 (AMGQ…VTAA), 4159-4217 (AMKG…ITQA), 4285-4343 (QMGN…VEAA), 4411-4469 (AMAN…VENA), 4537-4595 (AMGT…INQI), 4663-4721 (AMGQ…VDRA), 4789-4847 (AMNS…VDNA), 4915-4973 (AMGA…INGM), 5041-5099 (AMTV…VNSA), 5167-5225 (AMKG…ITQA), 5293-5351 (AMHS…VEQA), 5419-5477 (AMGQ…VERA), 5545-5603 (AMTA…VTNA), 5671-5729 (AMKG…INQA), 5797-5855 (AMTN…VESA), 5923-5981 (AMSN…VEQA), 6049-6107 (AMNQ…INQK), 6175-6232 (AMGN…VQAA), 6300-6358 (AMGQ…VEAA), 6426-6484 (AMQR…VEQA), 6552-6610 (AMDQ…VTAA), 6678-6736 (AMNQ…VTQA), 6804-6862 (AMER…VEAA), 6930-6988 (AMGN…VEAA), 7056-7114 (AMDK…INQA), 7182-7240 (AMGN…VEQA), 7308-7366 (AMTQ…ITAA), 7434-7492 (AMTQ…IQQA), 7560-7618 (AMTN…VEQA), 7686-7744 (AMTQ…VAQA), 7812-7870 (AMGT…VTQA), 7938-7996 (AMSN…ITRA), 8064-8125 (AMDQ…ITNE), 8190-8251 (AMDQ…ITNE), 8316-8374 (AMEL…VNRA), 8442-8500 (AMGN…VEQA), 8568-8625 (AMHG…INQA), 8693-8751 (LMDA…VTSA), 8819-8877 (AMKA…IDQA), 8945-9003 (AMEA…VEQL), 9071-9129 (AMQA…VEQL), 9197-9255 (AMET…VDQA), 9323-9377 (SMDQ…VDQA), 9445-9504 (VMDQ…VIKL), and 9699-9755 (AMET…INGA). Residues 7066–7080 (DNATTKQNQNYTDSS) are compositionally biased toward polar residues. Residues 7066 to 7085 (DNATTKQNQNYTDSSPNKKD) are disordered. Positions 10492 to 10507 (DHSKPSSNSDGQSNSH) are enriched in polar residues. Residues 10492–10530 (DHSKPSSNSDGQSNSHLHVGYGTVNHPFNSSPIGHKKKL) form a disordered region. The chain crosses the membrane as a helical span at residues 10552–10572 (IKNALGVVGISGLLASFWFFI). The segment at 10649 to 10746 (RRKEDEEDVE…KKKKSKKNKK (98 aa)) is disordered. Residues 10664–10674 (TDEKVLQDNEH) are compositionally biased toward basic and acidic residues. Basic residues predominate over residues 10719-10746 (KGKKSASKKPSKKVAAKKKKKKSKKNKK).

Its subcellular location is the cell membrane. This chain is Extracellular matrix-binding protein ebh (ebh), found in Staphylococcus aureus (strain MRSA252).